The chain runs to 546 residues: Nicotinic acid-CoA ligase olcI (546 aa).

Met194 to Lys205 lines the AMP pocket. The AMP-binding stretch occupies residues Glu445–Lys523.

It belongs to the ATP-dependent AMP-binding enzyme family.

It carries out the reaction nicotinate + ATP + CoA = nicotinyl-CoA + AMP + diphosphate. The protein operates within secondary metabolite biosynthesis; terpenoid biosynthesis. In terms of biological role, nicotinic acid-CoA ligase; part of the gene cluster that mediates the biosynthesis of 15-deoxyoxalicine B. The first step of the pathway is the synthesis of nicotinyl-CoA from nicotinic acid by the nicotinic acid-CoA ligase olcI. Nicotinyl-CoA is then a substrate of polyketide synthase olcA to produce 4-hydroxy-6-(3-pyridinyl)-2H-pyran-2-one (HPPO) which is further prenylated by the polyprenyl transferase olcH to yield geranylgeranyl-HPPO. Geranylgeranyl pyrophosphate is provided by the cluster-specific geranylgeranyl pyrophosphate synthase olcC. The FAD-dependent monooxygenase olcE catalyzes the epoxidation of geranylgeranyl-HPPO and the terpene cyclase olcD catalyzes the cyclization of the terpenoid component, resulting in the formation of the tricyclic terpene moiety seen in predecaturin E. The cytochrome P450 monooxygenase then catalyzes the allylic oxidation of predecaturin E, which is followed by spirocylization with concomitant loss of one molecule of water to form decaturin E. Decaturin E is the substrate of the cytochrome P450 monooxygenase olcJ which hydroxylates it at the C-29 position to form decaturin F. The short-chain dehydrogenase/reductase olcF may catalyze the oxidation of decaturin F to generate the 29-hydroxyl-27-one intermediate, and subsequent hemiacetal formation probably leads to the formation of decaturin C. The dioxygenase olcK may be a peroxisomal enzyme that catalyzes the hydroxylation of decaturin C into decaturin A once decaturin C is shuttled into the peroxisome by the MFS transporter olcL. Finally the cytochrome P450 monooxygenase olcB catalyzes the oxidative rearrangement to yield 15-deoxyoxalicine B. In the absence of olcJ, decaturin E may be shunted to a pathway in which it is oxidized to a ketone, possibly by olcF, to form decaturin D, which undergoes further allylic oxidation to yield decaturin G. Moreover, in the absence of oclK or oclL, oclB can convert decaturin C into 15-deoxyoxalicine A. The chain is Nicotinic acid-CoA ligase olcI from Penicillium canescens.